Reading from the N-terminus, the 146-residue chain is Holo-[acyl-carrier-protein] synthase (146 aa).

Mg(2+) is bound by residues aspartate 9 and glutamate 63.

Belongs to the P-Pant transferase superfamily. AcpS family. Mg(2+) serves as cofactor.

It is found in the cytoplasm. The enzyme catalyses apo-[ACP] + CoA = holo-[ACP] + adenosine 3',5'-bisphosphate + H(+). Its function is as follows. Transfers the 4'-phosphopantetheine moiety from coenzyme A to a Ser of acyl-carrier-protein. In Burkholderia ambifaria (strain ATCC BAA-244 / DSM 16087 / CCUG 44356 / LMG 19182 / AMMD) (Burkholderia cepacia (strain AMMD)), this protein is Holo-[acyl-carrier-protein] synthase.